The chain runs to 363 residues: Protein MAK32 (363 aa).

The protein to S.pombe SpAC4G8.14c.

In terms of biological role, necessary for the structural stability of L-A double-stranded RNA-containing particles. Necessary for growth at 37 degrees Celsius as well as for maintenance of the killer plasmid. This is Protein MAK32 (MAK32) from Saccharomyces cerevisiae (strain ATCC 204508 / S288c) (Baker's yeast).